A 208-amino-acid chain; its full sequence is Small ribosomal subunit protein uS4 (208 aa).

The segment at 32–53 is disordered; that stretch reads LNRKRGKNSPGQHGASKVKMSD. Residues 99–161 form the S4 RNA-binding domain; the sequence is LRLDNVVYRL…YKSNVIIKKL (63 aa).

Belongs to the universal ribosomal protein uS4 family. Part of the 30S ribosomal subunit. Contacts protein S5. The interaction surface between S4 and S5 is involved in control of translational fidelity.

Functionally, one of the primary rRNA binding proteins, it binds directly to 16S rRNA where it nucleates assembly of the body of the 30S subunit. Its function is as follows. With S5 and S12 plays an important role in translational accuracy. This chain is Small ribosomal subunit protein uS4, found in Endomicrobium trichonymphae.